A 367-amino-acid polypeptide reads, in one-letter code: Molybdopterin synthase catalytic subunit (367 aa).

Substrate-binding positions include 101-102, K117, and 124-126; these read HR and KKE. The disordered stretch occupies residues 325-350; it reads RHFTKREPSSMEAAPPKKSRKKSYSA.

It belongs to the MoaE family. MOCS2B subfamily. In terms of assembly, heterotetramer; composed of 2 small (Mocs2A) and 2 large (Mocs2B) subunits. Component of the Ada2a-containing (ATAC) complex composed of at least Ada2a, Atac1, Hcf, Ada3, Gcn5, Mocs2B, Charac-14, Atac3, Atac2, NC2beta and wds.

The protein resides in the cytoplasm. Its subcellular location is the nucleus. The catalysed reaction is 2 [molybdopterin-synthase sulfur-carrier protein]-C-terminal-Gly-aminoethanethioate + cyclic pyranopterin phosphate + H2O = molybdopterin + 2 [molybdopterin-synthase sulfur-carrier protein]-C-terminal Gly-Gly + 2 H(+). Its pathway is cofactor biosynthesis; molybdopterin biosynthesis. Its function is as follows. Catalytic subunit of the molybdopterin synthase complex, a complex that catalyzes the conversion of precursor Z into molybdopterin. Acts by mediating the incorporation of 2 sulfur atoms from thiocarboxylated Mocs2A into precursor Z to generate a dithiolene group. Involved during biosynthesis of the molybdenum cofactor. This Drosophila melanogaster (Fruit fly) protein is Molybdopterin synthase catalytic subunit.